Here is a 622-residue protein sequence, read N- to C-terminus: Probable potassium transport system protein Kup (622 aa).

Transmembrane regions (helical) follow at residues 7–27 (LAIG…LYAF), 44–64 (VLGV…IQYV), 95–115 (GWLV…DSMI), 133–153 (PELQ…LFVL), 165–185 (FAPV…ISIV), 199–219 (AVLF…SVVL), 243–263 (WFGF…AMIV), 290–310 (LVIL…SGAF), 338–358 (IYIP…VLTF), 370–390 (IAVT…LVGV), 395–415 (WYYA…YFAA), and 422–442 (DGGW…TTWA).

The protein belongs to the HAK/KUP transporter (TC 2.A.72) family.

The protein localises to the cell inner membrane. The enzyme catalyses K(+)(in) + H(+)(in) = K(+)(out) + H(+)(out). Its function is as follows. Transport of potassium into the cell. Likely operates as a K(+):H(+) symporter. The protein is Probable potassium transport system protein Kup of Erythrobacter litoralis (strain HTCC2594).